We begin with the raw amino-acid sequence, 703 residues long: Methionine--tRNA ligase (703 aa).

Positions 12–22 match the 'HIGH' region motif; that stretch reads PYANGPLHIGH. 4 residues coordinate Zn(2+): C143, C146, C156, and C159. A 'KMSKS' region motif is present at residues 331-335; it reads KMSKT. K334 serves as a coordination point for ATP. 2 stretches are compositionally biased toward low complexity: residues 556-568 and 577-594; these read AAPQ…PAKG and EAPA…AAES. Disordered regions lie at residues 556–594 and 682–703; these read AAPQ…AAES and GPGG…SEVK. The 102-residue stretch at 602–703 folds into the tRNA-binding domain; it reads DFAKVVLKAG…GDVAPGSEVK (102 aa).

Belongs to the class-I aminoacyl-tRNA synthetase family. MetG type 1 subfamily. As to quaternary structure, homodimer. Requires Zn(2+) as cofactor.

Its subcellular location is the cytoplasm. The catalysed reaction is tRNA(Met) + L-methionine + ATP = L-methionyl-tRNA(Met) + AMP + diphosphate. In terms of biological role, is required not only for elongation of protein synthesis but also for the initiation of all mRNA translation through initiator tRNA(fMet) aminoacylation. The sequence is that of Methionine--tRNA ligase from Myxococcus xanthus (strain DK1622).